A 260-amino-acid chain; its full sequence is Voltage-dependent calcium channel gamma-6 subunit (260 aa).

Helical transmembrane passes span 43-63, 143-163, 169-189, and 221-241; these read LLVA…EFWV, VIAV…IMVL, FLLR…FVSL, and LGCG…FLLL.

It belongs to the PMP-22/EMP/MP20 family. CACNG subfamily. Interacts with CACNA1C. Identified in a complex with the L-type calcium channel subunits CACNA1C, CACNA2D1 and either CACNB1 or CACNB2. As to expression, detected in heart atrium and ventricle, aorta and skeletal muscle. Detected in heart left ventricle.

Its subcellular location is the cell membrane. In terms of biological role, regulates the activity of L-type calcium channels that contain CACNA1C as pore-forming subunit. The chain is Voltage-dependent calcium channel gamma-6 subunit (Cacng6) from Rattus norvegicus (Rat).